A 78-amino-acid chain; its full sequence is Small ribosomal subunit protein bS20 (78 aa).

The interval 1 to 34 (MANIKSNLKRNKQNRARHTVVHSQTSAVKTQIKK) is disordered. Residues 7-20 (NLKRNKQNRARHTV) show a composition bias toward basic residues. The segment covering 21 to 34 (VHSQTSAVKTQIKK) has biased composition (polar residues).

The protein belongs to the bacterial ribosomal protein bS20 family.

Binds directly to 16S ribosomal RNA. The chain is Small ribosomal subunit protein bS20 from Malacoplasma penetrans (strain HF-2) (Mycoplasma penetrans).